The following is a 276-amino-acid chain: MKMINSIFTHGSLIILLLLFHSISIKAQEVDDEREFDYLEGSELGPEKWGELRPEWGTCKRGKMQSPIDISNPVQVTSKELLQTKYKAQNAIINNRGHDIMVRWEGDAGSILINEREFDLLQAHWHAPSEHAINGTRYAMELHMLHRSTDPKLTPTMVVVAVFYEIGDVDPFLSRLGPIMSSLIDQTNEHKQAGVINPMEIQLDDECYYKYIGSLTTPSCTEGVTWIINKRINTVSSDQVKLLREAVHDHAKNNARPLQALNHREVQLHCHKDRKD.

The N-terminal stretch at 1 to 27 (MKMINSIFTHGSLIILLLLFHSISIKA) is a signal peptide. The region spanning 34 to 270 (REFDYLEGSE…LNHREVQLHC (237 aa)) is the Alpha-carbonic anhydrase domain. A disulfide bridge links cysteine 59 with cysteine 220. Histidine 98 (proton acceptor) is an active-site residue. The Zn(2+) site is built by histidine 124 and histidine 126. Residue asparagine 134 is glycosylated (N-linked (GlcNAc...) asparagine). Histidine 143 provides a ligand contact to Zn(2+). Residues 216–217 (TT) are substrate binding.

The protein belongs to the alpha-class carbonic anhydrase family. In terms of assembly, homodimer. Zn(2+) serves as cofactor. As to expression, confined to nectaries.

The catalysed reaction is hydrogencarbonate + H(+) = CO2 + H2O. It participates in one-carbon metabolism. Its function is as follows. Involved in the production of blood-red nectar containing the alkaloid nesocodin and that serves as a visual attractant for pollinator visitation, including vertebrates such as Phelsuma geckos. The nectar is initially acidic and pale yellow, but slowly becomes alkaline before turning into red within 24 hours. Together with NEC2 and NEC3, facilitates the condensation of sinapaldehyde ((E)-3,5-dimethoxy-4-hydroxycinnamaldehyde) and proline to form nesocodin, a pigment with a stable imine bond. Mediates the alkalinization (pH increase) of the flower nectar by catalyzing the reversible hydration of carbon dioxide. This chain is Carbonic anhydrase Nec1, found in Nesocodon mauritianus (Blue Mauritius bellflower).